The chain runs to 394 residues: Phosphoglycerate kinase (394 aa).

Residues 21–23 (DFN), R36, 59–62 (HLGR), R118, and R151 contribute to the substrate site. Position 183 is a phosphoserine (S183). Residues K201 and G292 each coordinate ATP. Residue T299 is modified to Phosphothreonine. Residues E323 and 350–353 (GGDS) contribute to the ATP site.

This sequence belongs to the phosphoglycerate kinase family. In terms of assembly, monomer.

It localises to the cytoplasm. It catalyses the reaction (2R)-3-phosphoglycerate + ATP = (2R)-3-phospho-glyceroyl phosphate + ADP. The protein operates within carbohydrate degradation; glycolysis; pyruvate from D-glyceraldehyde 3-phosphate: step 2/5. The protein is Phosphoglycerate kinase of Bacillus cereus (strain G9842).